A 516-amino-acid polypeptide reads, in one-letter code: Cytochrome P450 monooxygenase otaC (516 aa).

A helical transmembrane segment spans residues 13–30 (FLWTAFAVGVVYCCTRMV). Cysteine 454 is a binding site for heme.

The protein belongs to the cytochrome P450 family. The cofactor is heme.

The protein resides in the membrane. The catalysed reaction is 7-methylmellein + 3 reduced [NADPH--hemoprotein reductase] + 3 O2 = 7-carboxymellein + 3 oxidized [NADPH--hemoprotein reductase] + 4 H2O + 4 H(+). Its pathway is mycotoxin biosynthesis. Its function is as follows. Cytochrome P450 monooxygenase; part of the gene cluster that mediates the biosynthesis of ochratoxin A (OTA), a mycotoxin composed of a chlorinated type I polyketide dihydroisocoumarin moiety linked to L-phenylalanine, and demonstrated to have nephrotoxic, immunotoxic, genotoxic, neurotoxic, and teratogenic properties. OtaC catalyzes the oxidation of 7-methylmellein (7-MM) into 7-carboxymellein. The pathway begins with the highly reducing polyketide synthase otaA that catalyzes the formation of the isocoumarin group during the initial stages of biosynthesis, starting from one acetate and 4 malonate units, to originate the characteristic pentaketide skeleton 7-methylmellein (7-MM) of the OTA molecule. The newly identified cyclase otaY might be involved in the polyketide cyclization reaction during the initial steps of the OTA biosynthesis. 7-MM is then oxidized into 7-carboxymellein (also called ochratoxin beta) by the cytochrome P450 monooxygenase otaC. The NRPS encoded by the otaB gene is involved in the linking of phenylalanine to the dihydroisocoumarin ring. The reaction catalyzed by NRPS results in the production of ochratoxin B (OTB), which is the non-chlorinated analog of OTA and which subsequently serves as the substrate of the halogenase otaD for chlorination activity to form the final molecular structure of OTA, containing a chlorine atom in the C-5 position of the molecule. The sequence is that of Cytochrome P450 monooxygenase otaC from Aspergillus carbonarius (strain ITEM 5010).